Reading from the N-terminus, the 269-residue chain is Tryptophan synthase alpha chain (269 aa).

Catalysis depends on proton acceptor residues glutamate 56 and aspartate 67.

The protein belongs to the TrpA family. Tetramer of two alpha and two beta chains.

It catalyses the reaction (1S,2R)-1-C-(indol-3-yl)glycerol 3-phosphate + L-serine = D-glyceraldehyde 3-phosphate + L-tryptophan + H2O. The protein operates within amino-acid biosynthesis; L-tryptophan biosynthesis; L-tryptophan from chorismate: step 5/5. Its function is as follows. The alpha subunit is responsible for the aldol cleavage of indoleglycerol phosphate to indole and glyceraldehyde 3-phosphate. The protein is Tryptophan synthase alpha chain of Mycobacterium ulcerans (strain Agy99).